Here is a 267-residue protein sequence, read N- to C-terminus: Cysteine protease avirulence protein AvrPphB (267 aa).

Glycine 63 carries the N-myristoyl glycine; by host lipid modification. Active-site residues include cysteine 98, histidine 212, and aspartate 227.

This sequence belongs to the peptidase C58 family. In terms of assembly, in infected plant cells, the 28 kDa product interacts with PBS1. Post-translationally, autocleaved. This function is essential for myristoylation in infected plant cell and for eliciting the plant hypersensitive response. In terms of processing, myristoylation of 28 kDa product in infected plant cells; it mediates the localization to membranes.

It localises to the secreted. It is found in the host membrane. Its function is as follows. Cysteine protease avirulence protein, which is essential during infection of plant cells from cultivar-specific of beans and Arabidopsis thaliana. The autocleavage of the protein is required for virulence function. May act by affecting the plant defense system. In plants lacking R3 or RPS5 resistance genes, it probably impairs the plant defense system and leads to the bacteria multiplication. In contrast, in plants containing the R3 or RPS5 protein, it is unable to induce disease symptoms, explaining its avirulence name. The 7 kDa product is required for the type-III translocation from Pseudomonas strains to the plant, but are partially dispensable for effector recognition following in planta expression. In infected plants, it acts by cleaving the PBS1 protein, which leads to resistance or disease, depending on the presence or absence of RPS5, respectively. Targets the Arabidopsis kinases PBS1, BIK1, PBL1, PBL2, PBL3, PBL5, PBL7, PBL9 and PBL11 for cleavage in vitro. Can block recognition of AvrB avirulence factor by plant cells by cleaving Arabidopsis RIPK kinase and suppressing Arabidopsis RPM1 activation. Cannot block AvrRpm1-induced activation of RPM1. In Pseudomonas savastanoi pv. phaseolicola (Pseudomonas syringae pv. phaseolicola), this protein is Cysteine protease avirulence protein AvrPphB (avrPph3).